Here is a 225-residue protein sequence, read N- to C-terminus: Glutathione S-transferase Mu 3 (225 aa).

One can recognise a GST N-terminal domain in the interval 5 to 92 (SSMVLGYWDI…YIARKHNMCG (88 aa)). Glutathione-binding positions include 11–12 (YW), 50–54 (WLDVK), and 63–64 (NL). Lysine 54 participates in a covalent cross-link: Glycyl lysine isopeptide (Lys-Gly) (interchain with G-Cter in SUMO2). Residue lysine 73 forms a Glycyl lysine isopeptide (Lys-Gly) (interchain with G-Cter in SUMO2) linkage. 76 to 77 (QS) contacts glutathione. The GST C-terminal domain occupies 94 to 212 (TEEEKIRVDI…QSDQFFKMPI (119 aa)). Tyrosine 120 contributes to the substrate binding site.

It belongs to the GST superfamily. Mu family. As to quaternary structure, homodimer.

The protein resides in the cytoplasm. The enzyme catalyses RX + glutathione = an S-substituted glutathione + a halide anion + H(+). In terms of biological role, conjugation of reduced glutathione to a wide number of exogenous and endogenous hydrophobic electrophiles. May govern uptake and detoxification of both endogenous compounds and xenobiotics at the testis and brain blood barriers. The polypeptide is Glutathione S-transferase Mu 3 (GSTM3) (Macaca fuscata fuscata (Japanese macaque)).